We begin with the raw amino-acid sequence, 204 residues long: MSIKYVATSKLPTPWGVFAMHGFEDTESGKEHVALTFGTLSADEPVLGRIHSECLTGDALFSLRCDCGFQLQAAMQNIAETGSGFILYLRQEGRGIGLLNKIRAYELQDKGANTVEANEQLGFEADMRKYDMIKPMLEQIGVKHVRLMTNNPRKVKAMKEFGIEVVERVPLQVGKNRYNEAYLKTKSTELGHMMSEYHFMDENK.

49–53 (RIHSE) serves as a coordination point for GTP. Cys54, Cys65, and Cys67 together coordinate Zn(2+). GTP is bound by residues Gln70, 92–94 (EGR), and Thr114. Asp126 (proton acceptor) is an active-site residue. The Nucleophile role is filled by Arg128. GTP is bound by residues Thr149 and Lys154.

It belongs to the GTP cyclohydrolase II family. Requires Zn(2+) as cofactor.

It carries out the reaction GTP + 4 H2O = 2,5-diamino-6-hydroxy-4-(5-phosphoribosylamino)-pyrimidine + formate + 2 phosphate + 3 H(+). Its pathway is cofactor biosynthesis; riboflavin biosynthesis; 5-amino-6-(D-ribitylamino)uracil from GTP: step 1/4. Functionally, catalyzes the conversion of GTP to 2,5-diamino-6-ribosylamino-4(3H)-pyrimidinone 5'-phosphate (DARP), formate and pyrophosphate. This is GTP cyclohydrolase-2 from Shewanella baltica (strain OS223).